We begin with the raw amino-acid sequence, 248 residues long: Kallikrein-12 (248 aa).

A signal peptide spans 1–17 (MGLSIFLLLCVLGLSQA). The Peptidase S1 domain occupies 22-246 (IFNGTECGRN…YVDWIRMIMR (225 aa)). N-linked (GlcNAc...) asparagine glycosylation is present at Asn24. 6 disulfides stabilise this stretch: Cys28-Cys161, Cys47-Cys63, Cys133-Cys235, Cys140-Cys206, Cys172-Cys186, and Cys196-Cys222. Catalysis depends on charge relay system residues His62 and Asp108. N-linked (GlcNAc...) asparagine glycosylation is present at Asn163. Catalysis depends on Ser200, which acts as the Charge relay system.

This sequence belongs to the peptidase S1 family. Kallikrein subfamily.

It is found in the secreted. This is Kallikrein-12 (KLK12) from Homo sapiens (Human).